The chain runs to 401 residues: Tyrosine--tRNA ligase (401 aa).

The 'HIGH' region motif lies at 42 to 51; the sequence is PTAPDLHLGH. Residues 226-230 carry the 'KMSKS' region motif; it reads KMSKS. Position 229 (Lys-229) interacts with ATP. Positions 336 to 397 constitute an S4 RNA-binding domain; it reads IALAQLLKQI…GKRRIAKLSI (62 aa).

It belongs to the class-I aminoacyl-tRNA synthetase family. TyrS type 2 subfamily. Homodimer.

Its subcellular location is the cytoplasm. It catalyses the reaction tRNA(Tyr) + L-tyrosine + ATP = L-tyrosyl-tRNA(Tyr) + AMP + diphosphate + H(+). Its function is as follows. Catalyzes the attachment of tyrosine to tRNA(Tyr) in a two-step reaction: tyrosine is first activated by ATP to form Tyr-AMP and then transferred to the acceptor end of tRNA(Tyr). The chain is Tyrosine--tRNA ligase from Legionella pneumophila (strain Lens).